The following is a 105-amino-acid chain: Large ribosomal subunit protein uL24 (105 aa).

This sequence belongs to the universal ribosomal protein uL24 family. Part of the 50S ribosomal subunit.

Its function is as follows. One of two assembly initiator proteins, it binds directly to the 5'-end of the 23S rRNA, where it nucleates assembly of the 50S subunit. Functionally, one of the proteins that surrounds the polypeptide exit tunnel on the outside of the subunit. This Acinetobacter baumannii (strain AB307-0294) protein is Large ribosomal subunit protein uL24.